A 338-amino-acid polypeptide reads, in one-letter code: Ketol-acid reductoisomerase (NADP(+)) (338 aa).

The KARI N-terminal Rossmann domain maps to 1-181; the sequence is MNVYYDRDCD…GGGRTGIIET (181 aa). NADP(+) contacts are provided by residues 24–27, arginine 47, serine 50, serine 52, and 82–85; these read YGSQ and DEFQ. The active site involves histidine 107. NADP(+) is bound at residue glycine 133. Residues 182-327 enclose the KARI C-terminal knotted domain; it reads TFKDETETDL…GNLRAMMPWI (146 aa). 4 residues coordinate Mg(2+): aspartate 190, glutamate 194, glutamate 226, and glutamate 230. Residue serine 251 coordinates substrate.

The protein belongs to the ketol-acid reductoisomerase family. Requires Mg(2+) as cofactor.

It carries out the reaction (2R)-2,3-dihydroxy-3-methylbutanoate + NADP(+) = (2S)-2-acetolactate + NADPH + H(+). The catalysed reaction is (2R,3R)-2,3-dihydroxy-3-methylpentanoate + NADP(+) = (S)-2-ethyl-2-hydroxy-3-oxobutanoate + NADPH + H(+). It participates in amino-acid biosynthesis; L-isoleucine biosynthesis; L-isoleucine from 2-oxobutanoate: step 2/4. The protein operates within amino-acid biosynthesis; L-valine biosynthesis; L-valine from pyruvate: step 2/4. Functionally, involved in the biosynthesis of branched-chain amino acids (BCAA). Catalyzes an alkyl-migration followed by a ketol-acid reduction of (S)-2-acetolactate (S2AL) to yield (R)-2,3-dihydroxy-isovalerate. In the isomerase reaction, S2AL is rearranged via a Mg-dependent methyl migration to produce 3-hydroxy-3-methyl-2-ketobutyrate (HMKB). In the reductase reaction, this 2-ketoacid undergoes a metal-dependent reduction by NADPH to yield (R)-2,3-dihydroxy-isovalerate. This chain is Ketol-acid reductoisomerase (NADP(+)), found in Trichlorobacter lovleyi (strain ATCC BAA-1151 / DSM 17278 / SZ) (Geobacter lovleyi).